Reading from the N-terminus, the 469-residue chain is 6-phosphogluconate dehydrogenase, NADP(+)-dependent, decarboxylating (469 aa).

NADP(+)-binding positions include 10 to 15 (GLAVMG), 33 to 35 (NRS), 74 to 76 (VKA), and N102. Residues N102 and 128-130 (SGG) each bind substrate. Catalysis depends on K182, which acts as the Proton acceptor. Substrate is bound at residue 185-186 (HN). E189 functions as the Proton donor in the catalytic mechanism. 5 residues coordinate substrate: Y190, K260, R287, R446, and H452.

This sequence belongs to the 6-phosphogluconate dehydrogenase family. As to quaternary structure, homodimer.

The enzyme catalyses 6-phospho-D-gluconate + NADP(+) = D-ribulose 5-phosphate + CO2 + NADPH. Its pathway is carbohydrate degradation; pentose phosphate pathway; D-ribulose 5-phosphate from D-glucose 6-phosphate (oxidative stage): step 3/3. Its function is as follows. Catalyzes the oxidative decarboxylation of 6-phosphogluconate to ribulose 5-phosphate and CO(2), with concomitant reduction of NADP to NADPH. Is the predominant 6-P-gluconate dehydrogenase isoenzyme in B.subtilis during growth on glucose and gluconate. In Bacillus subtilis (strain 168), this protein is 6-phosphogluconate dehydrogenase, NADP(+)-dependent, decarboxylating (gndA).